We begin with the raw amino-acid sequence, 396 residues long: Polygalacturonase (396 aa).

The N-terminal stretch at 1–22 (MDLKFKVHFALVLLFLAHFGES) is a signal peptide. Residues Asn-143, Asn-151, Asn-174, Asn-181, Asn-203, and Asn-208 are each glycosylated (N-linked (GlcNAc...) asparagine). 2 PbH1 repeats span residues 172-198 (CKNL…HVSR) and 199-220 (SSSV…SVGD). The active-site Proton donor is the Asp-213. A disulfide bond links Cys-215 and Cys-232. The active site involves His-236. PbH1 repeat units follow at residues 252-273 (VVGV…RIKT), 282-303 (VNDV…VIDQ), and 316-356 (PSQV…EVGD). 2 N-linked (GlcNAc...) asparagine glycosylation sites follow: Asn-259 and Asn-294. The tract at residues 364–396 (KEGPAKSSCENIKPSLKGKQNPPVCTASAASSS) is disordered. Cysteines 372 and 388 form a disulfide.

Belongs to the glycosyl hydrolase 28 family. In terms of tissue distribution, pollen.

The protein localises to the secreted. The protein resides in the cell wall. The catalysed reaction is (1,4-alpha-D-galacturonosyl)n+m + H2O = (1,4-alpha-D-galacturonosyl)n + (1,4-alpha-D-galacturonosyl)m.. Functionally, may function in depolymerizing pectin during pollen development, germination, and tube growth. The polypeptide is Polygalacturonase (PG1) (Nicotiana tabacum (Common tobacco)).